Here is a 457-residue protein sequence, read N- to C-terminus: Protein translocase subunit SecY (457 aa).

10 helical membrane-spanning segments follow: residues Ile-17–Gly-37, Ile-75–Phe-95, Thr-118–Leu-138, Trp-162–Val-182, Ile-195–Phe-215, Ile-230–Ile-250, Val-287–Leu-307, Val-326–Thr-346, Leu-386–Leu-406, and Val-412–Met-432.

It belongs to the SecY/SEC61-alpha family. As to quaternary structure, component of the Sec protein translocase complex. Heterotrimer consisting of SecY, SecE and SecG subunits. The heterotrimers can form oligomers, although 1 heterotrimer is thought to be able to translocate proteins. Interacts with the ribosome. Interacts with SecDF, and other proteins may be involved. Interacts with SecA.

Its subcellular location is the cell inner membrane. Functionally, the central subunit of the protein translocation channel SecYEG. Consists of two halves formed by TMs 1-5 and 6-10. These two domains form a lateral gate at the front which open onto the bilayer between TMs 2 and 7, and are clamped together by SecE at the back. The channel is closed by both a pore ring composed of hydrophobic SecY resides and a short helix (helix 2A) on the extracellular side of the membrane which forms a plug. The plug probably moves laterally to allow the channel to open. The ring and the pore may move independently. This Chlamydia trachomatis serovar D (strain ATCC VR-885 / DSM 19411 / UW-3/Cx) protein is Protein translocase subunit SecY.